A 101-amino-acid chain; its full sequence is Pore-forming peptide amoebapore C (101 aa).

An N-terminal signal peptide occupies residues 1 to 24 (MKLFVLLCVFVLCLASQEKQQDRE). A Saposin B-type domain is found at 25–101 (IPVLCPVCTS…KLICGLIHAC (77 aa)). Disulfide bonds link Cys-29–Cys-101, Cys-32–Cys-95, and Cys-59–Cys-70.

As to quaternary structure, monomer. Homodimer. Hexamer; formed during insertion in the membrane.

It localises to the cytoplasmic granule. Its function is as follows. Forms pores in the cell membrane of host cells. Has antibacterial activity against M.luteus, no activity against E.coli. Implicated in the cytolytic activity of the parasite. The protein is Pore-forming peptide amoebapore C of Entamoeba histolytica (strain ATCC 30459 / HM-1:IMSS / ABRM).